The chain runs to 278 residues: Lectin 6 (278 aa).

The N-terminal stretch at 1–23 (MTLSSALIKIFITFLFLQNHVNS) is a signal peptide. N116, N139, and N271 each carry an N-linked (GlcNAc...) asparagine glycan.

Belongs to the leguminous lectin family.

Functionally, may be involved in arbuscular mycorrhizal (AM) symbiosis with AM fungi. The sequence is that of Lectin 6 from Medicago truncatula (Barrel medic).